A 601-amino-acid chain; its full sequence is Glutamine--fructose-6-phosphate aminotransferase [isomerizing] (601 aa).

Catalysis depends on C2, which acts as the Nucleophile; for GATase activity. A Glutamine amidotransferase type-2 domain is found at 2-214; the sequence is CGITGYIGTD…NGDIAHLTET (213 aa). SIS domains lie at 281–420 and 453–591; these read STET…ARNA and IGRE…IDKP. The active-site For Fru-6P isomerization activity is the K596.

As to quaternary structure, homodimer.

It localises to the cytoplasm. The enzyme catalyses D-fructose 6-phosphate + L-glutamine = D-glucosamine 6-phosphate + L-glutamate. Functionally, catalyzes the first step in hexosamine metabolism, converting fructose-6P into glucosamine-6P using glutamine as a nitrogen source. This chain is Glutamine--fructose-6-phosphate aminotransferase [isomerizing], found in Halobacterium salinarum (strain ATCC 700922 / JCM 11081 / NRC-1) (Halobacterium halobium).